The primary structure comprises 68 residues: Large ribosomal subunit protein uL29 (68 aa).

It belongs to the universal ribosomal protein uL29 family.

The sequence is that of Large ribosomal subunit protein uL29 from Streptococcus pneumoniae (strain JJA).